An 899-amino-acid polypeptide reads, in one-letter code: 1,4-alpha-glucan-branching enzyme 3, chloroplastic/amyloplastic (899 aa).

Residues 1–49 constitute a chloroplast transit peptide; that stretch reads MVSLSNQTRFSFHPNNLVVSEKRRLGISGVNFPRKIKLKITCFAAERPR. The interval 47–67 is disordered; the sequence is RPRQEKQKKKSQSQSTSDAEA. The active-site Proton donor is the E612.

This sequence belongs to the glycosyl hydrolase 13 family. GlgB subfamily. In terms of assembly, monomer. In terms of tissue distribution, mostly expressed in flowers and inflorescence, and, to a lower extent, in seedlings, roots, stems, leaves, siliques and seeds.

The protein resides in the plastid. The protein localises to the chloroplast stroma. It is found in the amyloplast. The enzyme catalyses Transfers a segment of a (1-&gt;4)-alpha-D-glucan chain to a primary hydroxy group in a similar glucan chain.. Its pathway is glycan biosynthesis; starch biosynthesis. Functionally, catalyzes the formation of the alpha-1,6-glucosidic linkages in starch by scission of a 1,4-alpha-linked oligosaccharide from growing alpha-1,4-glucan chains and the subsequent attachment of the oligosaccharide to the alpha-1,6 position. Essential during embryogenesis. This Arabidopsis thaliana (Mouse-ear cress) protein is 1,4-alpha-glucan-branching enzyme 3, chloroplastic/amyloplastic (SBE3).